Reading from the N-terminus, the 419-residue chain is UDP-N-acetylglucosamine 1-carboxyvinyltransferase (419 aa).

Phosphoenolpyruvate is bound at residue 22 to 23 (KN). UDP-N-acetyl-alpha-D-glucosamine is bound at residue arginine 92. Catalysis depends on cysteine 116, which acts as the Proton donor. Cysteine 116 is modified (2-(S-cysteinyl)pyruvic acid O-phosphothioketal). Residues aspartate 307 and valine 329 each contribute to the UDP-N-acetyl-alpha-D-glucosamine site.

The protein belongs to the EPSP synthase family. MurA subfamily.

It is found in the cytoplasm. The catalysed reaction is phosphoenolpyruvate + UDP-N-acetyl-alpha-D-glucosamine = UDP-N-acetyl-3-O-(1-carboxyvinyl)-alpha-D-glucosamine + phosphate. Its pathway is cell wall biogenesis; peptidoglycan biosynthesis. Its function is as follows. Cell wall formation. Adds enolpyruvyl to UDP-N-acetylglucosamine. This chain is UDP-N-acetylglucosamine 1-carboxyvinyltransferase, found in Pseudothermotoga lettingae (strain ATCC BAA-301 / DSM 14385 / NBRC 107922 / TMO) (Thermotoga lettingae).